The primary structure comprises 294 residues: Flavin-dependent thymidylate synthase (294 aa).

The 224-residue stretch at 27-250 folds into the ThyX domain; the sequence is GFIRVIDYMG…PFTYEAFEEY (224 aa). FAD is bound by residues threonine 73, 96 to 98, and glutamate 104; that span reads RHR. Residues 93–96, 104–108, and arginine 189 contribute to the dUMP site; these read QWIR and EYSAR. A ThyX motif motif is present at residues 96-106; it reads RHRTASVNEYS. Residues 205 to 207 and histidine 211 contribute to the FAD site; that span reads NLH. DUMP is bound at residue arginine 216. The active-site Involved in ionization of N3 of dUMP, leading to its activation is the arginine 216.

It belongs to the thymidylate synthase ThyX family. Homotetramer. It depends on FAD as a cofactor.

The catalysed reaction is dUMP + (6R)-5,10-methylene-5,6,7,8-tetrahydrofolate + NADPH + H(+) = dTMP + (6S)-5,6,7,8-tetrahydrofolate + NADP(+). The protein operates within pyrimidine metabolism; dTTP biosynthesis. Its function is as follows. Catalyzes the reductive methylation of 2'-deoxyuridine-5'-monophosphate (dUMP) to 2'-deoxythymidine-5'-monophosphate (dTMP) while utilizing 5,10-methylenetetrahydrofolate (mTHF) as the methyl donor, and NADPH and FADH(2) as the reductant. The protein is Flavin-dependent thymidylate synthase of Rickettsia prowazekii (strain Madrid E).